The sequence spans 404 residues: Retrotransposable element SLACS 45 kDa protein (404 aa).

Polar residues-rich tracts occupy residues 1–11 (MVRNLRSSEPQ) and 29–41 (PALNLQWPGQKQV). Disordered regions lie at residues 1 to 62 (MVRN…NTSI), 86 to 111 (KKAAHSPLKTKPVNKEGNRKKYGRPP), 134 to 251 (LGKG…KKGA), 317 to 341 (CRQQHPGGPPDSLHPDNNRESGAVS), and 369 to 404 (PKLPVPEQGDYPNARSGIGTGAPHSPHHCDRSAGPP). Positions 98–111 (VNKEGNRKKYGRPP) are enriched in basic and acidic residues. Over residues 141 to 151 (TAHTKSNQSRV) the composition is skewed to polar residues. The C2H2-type zinc-finger motif lies at 300–321 (CPVCGFAHPEETITVTHCRQQH). Residues 395-404 (HHCDRSAGPP) are compositionally biased toward basic and acidic residues.

The sequence is that of Retrotransposable element SLACS 45 kDa protein from Trypanosoma brucei gambiense.